Consider the following 321-residue polypeptide: Nacrein-like protein (321 aa).

The Alpha-carbonic anhydrase domain maps to 1 to 319 (RGPKNWCKVH…NKNVIVYRNH (319 aa)). The Proton acceptor role is filled by H58.

The protein belongs to the alpha-carbonic anhydrase family. In terms of tissue distribution, component of the organic matrix of calcified shell layers like nacre and prisms.

The protein resides in the secreted. This Mytilus californianus (California mussel) protein is Nacrein-like protein.